The primary structure comprises 305 residues: 2-oxoacid:ferredoxin oxidoreductase subunit beta (305 aa).

[4Fe-4S] cluster-binding residues include C12, C15, and C46. Residues 44-47 (IGCS) and H65 each bind thiamine diphosphate. D90 provides a ligand contact to Mg(2+). Thiamine diphosphate is bound at residue 91-92 (GD). Residues N118 and V120 each coordinate Mg(2+). Residue 122–123 (GL) coordinates thiamine diphosphate. C197 contributes to the [4Fe-4S] cluster binding site.

In terms of assembly, heterodimer composed of an alpha and a beta subunit. [4Fe-4S] cluster is required as a cofactor. Requires thiamine diphosphate as cofactor. It depends on Mg(2+) as a cofactor.

The protein resides in the cytoplasm. It carries out the reaction a 2-oxocarboxylate + 2 oxidized [2Fe-2S]-[ferredoxin] + CoA = an acyl-CoA + 2 reduced [2Fe-2S]-[ferredoxin] + CO2 + H(+). In terms of biological role, catalyzes the coenzyme A-dependent oxidative decarboxylation of different 2-oxoacids such as 2-oxoglutarate, pyruvate and 2-oxobutyrate to form their CoA derivatives. In Sulfolobus sp, this protein is 2-oxoacid:ferredoxin oxidoreductase subunit beta.